Consider the following 261-residue polypeptide: Putative ketoacyl reductase (261 aa).

Residues threonine 15, serine 16, isoleucine 18, arginine 38, glycine 39, aspartate 63, valine 64, asparagine 90, tyrosine 157, lysine 161, valine 190, and threonine 192 each coordinate NADP(+). Residue tyrosine 157 is the Proton acceptor of the active site.

The protein belongs to the short-chain dehydrogenases/reductases (SDR) family. Homotetramer.

It participates in antibiotic biosynthesis; actinorhodin biosynthesis. The sequence is that of Putative ketoacyl reductase (actIII) from Streptomyces coelicolor (strain ATCC BAA-471 / A3(2) / M145).